We begin with the raw amino-acid sequence, 160 residues long: Probable chemoreceptor glutamine deamidase CheD 2 (160 aa).

The protein belongs to the CheD family.

It catalyses the reaction L-glutaminyl-[protein] + H2O = L-glutamyl-[protein] + NH4(+). Probably deamidates glutamine residues to glutamate on methyl-accepting chemotaxis receptors (MCPs), playing an important role in chemotaxis. The sequence is that of Probable chemoreceptor glutamine deamidase CheD 2 from Geobacter sulfurreducens (strain ATCC 51573 / DSM 12127 / PCA).